An 878-amino-acid polypeptide reads, in one-letter code: NUT family member 2E (878 aa).

5 disordered regions span residues 273–324 (WSQG…DDSC), 417–511 (QKSQ…VPEE), 527–560 (LLGP…PPDP), 622–757 (RLPP…EEEE), and 775–878 (WLPQ…HCSQ). Pro residues-rich tracts occupy residues 278–288 (PLPPPPPPAAQ) and 427–444 (CLPP…PPAP). Basic and acidic residues-rich tracts occupy residues 537 to 551 (EPEK…KQPQ) and 622 to 631 (RLPPLKEKQH).

Belongs to the NUT family.

The sequence is that of NUT family member 2E (NUTM2E) from Homo sapiens (Human).